The following is a 239-amino-acid chain: tRNA (guanine-N(1)-)-methyltransferase (239 aa).

S-adenosyl-L-methionine-binding positions include Gly-112 and 132–137; that span reads IGDYVL.

This sequence belongs to the RNA methyltransferase TrmD family. Homodimer.

It is found in the cytoplasm. It catalyses the reaction guanosine(37) in tRNA + S-adenosyl-L-methionine = N(1)-methylguanosine(37) in tRNA + S-adenosyl-L-homocysteine + H(+). Its function is as follows. Specifically methylates guanosine-37 in various tRNAs. The chain is tRNA (guanine-N(1)-)-methyltransferase from Rhodospirillum rubrum (strain ATCC 11170 / ATH 1.1.1 / DSM 467 / LMG 4362 / NCIMB 8255 / S1).